We begin with the raw amino-acid sequence, 289 residues long: uncharacterized protein (289 aa).

The next 10 helical transmembrane spans lie at 7-27, 33-53, 65-85, 92-112, 123-143, 148-168, 182-202, 212-232, 241-261, and 265-285; these read LLLA…KIGL, FNLA…WVFW, WLHL…FQFL, ATNA…WGLV, GVFL…LEFF, IFGD…TVLG, AYAF…SGFA, VAAL…VWYY, SVAV…FYAL, and PDFF…LTTA. EamA domains follow at residues 14–136 and 159–285; these read LIWA…LIVS and FLWA…LTTA.

Belongs to the EamA transporter family.

Its subcellular location is the cell membrane. This is an uncharacterized protein from Archaeoglobus fulgidus (strain ATCC 49558 / DSM 4304 / JCM 9628 / NBRC 100126 / VC-16).